The sequence spans 487 residues: Pentatricopeptide repeat-containing protein At5g61370, mitochondrial (487 aa).

The transit peptide at 1–90 (MMSTTVRLNR…TSPRRLLRFF (90 aa)) directs the protein to the mitochondrion. PPR repeat units follow at residues 137–171 (DKQT…SCPQ), 172–202 (DGFT…HKDV), 207–241 (ELSV…GITP), 242–283 (DLFC…KIQP), 284–318 (TSMS…GCDP), 319–353 (DTGS…GFRP), 354–388 (ERKF…SVGG), and 389–423 (YGQV…DVTL). Residues 466 to 487 (TKPKLKLKPKRRSKTKKKNLQH) are disordered.

Belongs to the PPR family. P subfamily.

It localises to the mitochondrion. This Arabidopsis thaliana (Mouse-ear cress) protein is Pentatricopeptide repeat-containing protein At5g61370, mitochondrial.